The sequence spans 155 residues: Altered inheritance rate of mitochondria protein 29 (155 aa).

Ser-78 carries the phosphoserine modification.

It belongs to the UPF0538 family.

It is found in the cytoplasm. In terms of biological role, may be involved in mitochondrial organization and biogenesis. This is Altered inheritance rate of mitochondria protein 29 (AIM29) from Saccharomyces cerevisiae (strain ATCC 204508 / S288c) (Baker's yeast).